We begin with the raw amino-acid sequence, 183 residues long: MYLKVNIQDYFWSSSSEVKKLKLQEDRDQKCPIFFYRWEYWFQKWLEILQPNIPPAQNYELSLRLTDDSEIQILNNKYRYQNQPTDVLAFANLEVDIPQPEVVDSDLQLYLGDIVISVETAFQQAKQQGHPLITELTWLAAHGFLHLLGWDHLDQESWQKMVKQQLFLLNAVGEVYWITDNSR.

Residues H142, H146, and H152 each coordinate Zn(2+).

This sequence belongs to the endoribonuclease YbeY family. It depends on Zn(2+) as a cofactor.

The protein localises to the cytoplasm. Functionally, single strand-specific metallo-endoribonuclease involved in late-stage 70S ribosome quality control and in maturation of the 3' terminus of the 16S rRNA. The chain is Endoribonuclease YbeY from Trichodesmium erythraeum (strain IMS101).